We begin with the raw amino-acid sequence, 433 residues long: Pyrimidine-nucleoside phosphorylase (433 aa).

Lysine 81–serine 83 lines the phosphate pocket. The K(+) site is built by glycine 88 and threonine 90. Phosphate contacts are provided by residues threonine 92, lysine 108–serine 110, and threonine 120. Residues arginine 168 and lysine 187 each coordinate substrate. The K(+) site is built by leucine 243, alanine 246, and glutamate 255.

The protein belongs to the thymidine/pyrimidine-nucleoside phosphorylase family. In terms of assembly, homodimer. The cofactor is K(+).

The catalysed reaction is uridine + phosphate = alpha-D-ribose 1-phosphate + uracil. It carries out the reaction thymidine + phosphate = 2-deoxy-alpha-D-ribose 1-phosphate + thymine. The enzyme catalyses 2'-deoxyuridine + phosphate = 2-deoxy-alpha-D-ribose 1-phosphate + uracil. Its function is as follows. Catalyzes phosphorolysis of the pyrimidine nucleosides uridine, thymidine and 2'-deoxyuridine with the formation of the corresponding pyrimidine base and ribose-1-phosphate. This chain is Pyrimidine-nucleoside phosphorylase, found in Bacillus subtilis (strain 168).